Here is a 402-residue protein sequence, read N- to C-terminus: Protein FAM53A (402 aa).

Position 119 is a phosphoserine (Ser-119). Residues 170-215 (LVPGLPRRPVSPAGPTSPLTPRPASASSGFVDGSEGSTSSGPPWLS) form a disordered region. Positions 273 to 281 (RRVRRKRRR) match the Nuclear localization signal motif. Phosphoserine occurs at positions 306 and 309. A compositionally biased stretch (polar residues) spans 323–333 (TLVSSPCNSQG). Residues 323–402 (TLVSSPCNSQ…DLDLEQIENN (80 aa)) are disordered. A compositionally biased stretch (low complexity) spans 336–345 (GIITPSSSPR).

Belongs to the FAM53 family.

The protein localises to the nucleus. Its function is as follows. May play an important role in neural development; the dorsomedial roof of the third ventricle. In Mus musculus (Mouse), this protein is Protein FAM53A.